Consider the following 185-residue polypeptide: Potassium-transporting ATPase KdpC subunit (185 aa).

Residues 11-31 (LALLMTLVTGALYPLAVTGIA) traverse the membrane as a helical segment.

This sequence belongs to the KdpC family. The system is composed of three essential subunits: KdpA, KdpB and KdpC.

The protein resides in the cell inner membrane. Part of the high-affinity ATP-driven potassium transport (or Kdp) system, which catalyzes the hydrolysis of ATP coupled with the electrogenic transport of potassium into the cytoplasm. This subunit acts as a catalytic chaperone that increases the ATP-binding affinity of the ATP-hydrolyzing subunit KdpB by the formation of a transient KdpB/KdpC/ATP ternary complex. This Pseudomonas putida (strain ATCC 47054 / DSM 6125 / CFBP 8728 / NCIMB 11950 / KT2440) protein is Potassium-transporting ATPase KdpC subunit.